Here is a 183-residue protein sequence, read N- to C-terminus: Large ribosomal subunit protein uL22 (183 aa).

The interval 163 to 183 (KTAAKKQSAKKLKKQKMMYRE) is disordered. The span at 165 to 183 (AAKKQSAKKLKKQKMMYRE) shows a compositional bias: basic residues.

This sequence belongs to the universal ribosomal protein uL22 family.

The sequence is that of Large ribosomal subunit protein uL22 (rpl-17) from Pectinaria gouldii (Trumpet worm).